The following is a 298-amino-acid chain: Glutamyl-Q tRNA(Asp) synthetase (298 aa).

L-glutamate-binding positions include 9-13 and E45; that span reads RFAPS. Positions 12 to 22 match the 'HIGH' region motif; it reads PSPSGELHFGS. Residues C101, C103, Y115, and C119 each coordinate Zn(2+). The L-glutamate site is built by Y172 and R190. A 'KMSKS' region motif is present at residues 228–232; the sequence is KLSKQ. K231 contacts ATP.

This sequence belongs to the class-I aminoacyl-tRNA synthetase family. GluQ subfamily. Zn(2+) is required as a cofactor.

Functionally, catalyzes the tRNA-independent activation of glutamate in presence of ATP and the subsequent transfer of glutamate onto a tRNA(Asp). Glutamate is transferred on the 2-amino-5-(4,5-dihydroxy-2-cyclopenten-1-yl) moiety of the queuosine in the wobble position of the QUC anticodon. The sequence is that of Glutamyl-Q tRNA(Asp) synthetase from Salmonella typhimurium (strain LT2 / SGSC1412 / ATCC 700720).